A 692-amino-acid chain; its full sequence is Elongation factor G (692 aa).

A tr-type G domain is found at 8 to 283 (KNTRNIGIMA…AVVDYLPSPV (276 aa)). GTP contacts are provided by residues 17-24 (AHIDAGKT), 81-85 (DTPGH), and 135-138 (NKMD).

It belongs to the TRAFAC class translation factor GTPase superfamily. Classic translation factor GTPase family. EF-G/EF-2 subfamily.

The protein localises to the cytoplasm. Functionally, catalyzes the GTP-dependent ribosomal translocation step during translation elongation. During this step, the ribosome changes from the pre-translocational (PRE) to the post-translocational (POST) state as the newly formed A-site-bound peptidyl-tRNA and P-site-bound deacylated tRNA move to the P and E sites, respectively. Catalyzes the coordinated movement of the two tRNA molecules, the mRNA and conformational changes in the ribosome. This is Elongation factor G from Exiguobacterium sp. (strain ATCC BAA-1283 / AT1b).